The following is a 365-amino-acid chain: Methionine import ATP-binding protein MetN (365 aa).

The ABC transporter domain occupies 17–256 (IVFEHVTKEF…PQSETTQRFL (240 aa)). 53–60 (GHSGAGKS) contributes to the ATP binding site. The disordered stretch occupies residues 346–365 (SNSAAPTTSATVPTPTEEAH).

The protein belongs to the ABC transporter superfamily. Methionine importer (TC 3.A.1.24) family. As to quaternary structure, the complex is composed of two ATP-binding proteins (MetN), two transmembrane proteins (MetI) and a solute-binding protein (MetQ).

It is found in the cell membrane. It carries out the reaction L-methionine(out) + ATP + H2O = L-methionine(in) + ADP + phosphate + H(+). The enzyme catalyses D-methionine(out) + ATP + H2O = D-methionine(in) + ADP + phosphate + H(+). Its function is as follows. Part of the ABC transporter complex MetNIQ involved in methionine import. Responsible for energy coupling to the transport system. This chain is Methionine import ATP-binding protein MetN, found in Cutibacterium acnes (strain DSM 16379 / KPA171202) (Propionibacterium acnes).